A 165-amino-acid polypeptide reads, in one-letter code: Crossover junction endodeoxyribonuclease RuvC (165 aa).

Active-site residues include Asp-8, Glu-66, and Asp-138. Mg(2+) is bound by residues Asp-8, Glu-66, and Asp-138.

It belongs to the RuvC family. As to quaternary structure, homodimer which binds Holliday junction (HJ) DNA. The HJ becomes 2-fold symmetrical on binding to RuvC with unstacked arms; it has a different conformation from HJ DNA in complex with RuvA. In the full resolvosome a probable DNA-RuvA(4)-RuvB(12)-RuvC(2) complex forms which resolves the HJ. Mg(2+) serves as cofactor.

It localises to the cytoplasm. The enzyme catalyses Endonucleolytic cleavage at a junction such as a reciprocal single-stranded crossover between two homologous DNA duplexes (Holliday junction).. Functionally, the RuvA-RuvB-RuvC complex processes Holliday junction (HJ) DNA during genetic recombination and DNA repair. Endonuclease that resolves HJ intermediates. Cleaves cruciform DNA by making single-stranded nicks across the HJ at symmetrical positions within the homologous arms, yielding a 5'-phosphate and a 3'-hydroxyl group; requires a central core of homology in the junction. The consensus cleavage sequence is 5'-(A/T)TT(C/G)-3'. Cleavage occurs on the 3'-side of the TT dinucleotide at the point of strand exchange. HJ branch migration catalyzed by RuvA-RuvB allows RuvC to scan DNA until it finds its consensus sequence, where it cleaves and resolves the cruciform DNA. The sequence is that of Crossover junction endodeoxyribonuclease RuvC from Methylococcus capsulatus (strain ATCC 33009 / NCIMB 11132 / Bath).